Consider the following 124-residue polypeptide: SLIQFETLIMKVAKKSGMFWYSNYGCYCGWGGQGRPQDATDRCCFVHDCCYGKVTGCDPKMDVYSFSEENGDIVCGGDDPCKKEICECDRAAAICFRDNLNTYNDKKYWAFGAKNCPQEESEPC.

7 cysteine pairs are disulfide-bonded: cysteine 26–cysteine 116, cysteine 28–cysteine 44, cysteine 43–cysteine 95, cysteine 49–cysteine 124, cysteine 50–cysteine 88, cysteine 57–cysteine 81, and cysteine 75–cysteine 86. Ca(2+) contacts are provided by tyrosine 27, glycine 29, and glycine 31. Histidine 47 is a catalytic residue. Aspartate 48 contacts Ca(2+). Aspartate 89 is an active-site residue.

It belongs to the phospholipase A2 family. Group II subfamily. D49 sub-subfamily. Requires Ca(2+) as cofactor. Expressed by the venom gland.

The protein resides in the secreted. It carries out the reaction a 1,2-diacyl-sn-glycero-3-phosphocholine + H2O = a 1-acyl-sn-glycero-3-phosphocholine + a fatty acid + H(+). Functionally, snake venom phospholipase A2 (PLA2) that inhibits ADP-induced platelet aggregation. PLA2 catalyzes the calcium-dependent hydrolysis of the 2-acyl groups in 3-sn-phosphoglycerides. The sequence is that of Acidic phospholipase A2 from Gloydius ussuriensis (Ussuri mamushi).